Here is a 166-residue protein sequence, read N- to C-terminus: Myosin regulatory light chain 2, ventricular/cardiac muscle isoform (166 aa).

N,N,N-trimethylalanine is present on Ala2. At Asn14 the chain carries Deamidated asparagine. Residue Ser15 is modified to Phosphoserine; by ZIPK/DAPK3. Phosphoserine is present on Ser19. EF-hand domains are found at residues Thr24–Val59, Asp94–Arg129, and Phe130–Lys165. Ca(2+) contacts are provided by Asp37, Asn39, Asp41, and Asp48. Phosphothreonine is present on Thr52.

In terms of assembly, myosin is a hexamer of 2 heavy chains and 4 light chains. Interacts with MYOC. Post-translationally, N-terminus is methylated by METTL11A/NTM1. Phosphorylated by MYLK3 and MYLK2; promotes cardiac muscle contraction and function. Dephosphorylated by PPP1CB complexed to PPP1R12B. The phosphorylated form in adult is expressed as gradients across the heart from endocardium (low phosphorylation) to epicardium (high phosphorylation); regulates cardiac torsion and workload distribution. Highly expressed in type I muscle fibers.

Its subcellular location is the cytoplasm. It is found in the myofibril. The protein resides in the sarcomere. It localises to the a band. Contractile protein that plays a role in heart development and function. Following phosphorylation, plays a role in cross-bridge cycling kinetics and cardiac muscle contraction by increasing myosin lever arm stiffness and promoting myosin head diffusion; as a consequence of the increase in maximum contraction force and calcium sensitivity of contraction force. These events altogether slow down myosin kinetics and prolong duty cycle resulting in accumulated myosins being cooperatively recruited to actin binding sites to sustain thin filament activation as a means to fine-tune myofilament calcium sensitivity to force. During cardiogenesis plays an early role in cardiac contractility by promoting cardiac myofibril assembly. In Homo sapiens (Human), this protein is Myosin regulatory light chain 2, ventricular/cardiac muscle isoform.